The chain runs to 406 residues: Tryptophan 2,3-dioxygenase (406 aa).

Residue Ser19 is modified to Phosphoserine. Residues 72 to 76 (FIITH) and Arg144 each bind substrate. His328 is a binding site for heme. Position 342 (Thr342) interacts with substrate.

This sequence belongs to the tryptophan 2,3-dioxygenase family. Homotetramer. Dimer of dimers. It depends on heme as a cofactor. In terms of tissue distribution, liver.

It carries out the reaction L-tryptophan + O2 = N-formyl-L-kynurenine. Its pathway is amino-acid degradation; L-tryptophan degradation via kynurenine pathway; L-kynurenine from L-tryptophan: step 1/2. Its function is as follows. Heme-dependent dioxygenase that catalyzes the oxidative cleavage of the L-tryptophan (L-Trp) pyrrole ring and converts L-tryptophan to N-formyl-L-kynurenine. Catalyzes the oxidative cleavage of the indole moiety. This Rattus norvegicus (Rat) protein is Tryptophan 2,3-dioxygenase.